Consider the following 203-residue polypeptide: Large ribosomal subunit protein bL25 (203 aa).

It belongs to the bacterial ribosomal protein bL25 family. CTC subfamily. Part of the 50S ribosomal subunit; part of the 5S rRNA/L5/L18/L25 subcomplex. Contacts the 5S rRNA. Binds to the 5S rRNA independently of L5 and L18.

This is one of the proteins that binds to the 5S RNA in the ribosome where it forms part of the central protuberance. In Wolbachia pipientis subsp. Culex pipiens (strain wPip), this protein is Large ribosomal subunit protein bL25.